A 430-amino-acid polypeptide reads, in one-letter code: Enolase (430 aa).

Gln-163 serves as a coordination point for (2R)-2-phosphoglycerate. Residue Glu-205 is the Proton donor of the active site. Mg(2+) contacts are provided by Asp-242, Glu-288, and Asp-315. Lys-340, Arg-369, Ser-370, and Lys-391 together coordinate (2R)-2-phosphoglycerate. Lys-340 acts as the Proton acceptor in catalysis.

The protein belongs to the enolase family. It depends on Mg(2+) as a cofactor.

It localises to the cytoplasm. Its subcellular location is the secreted. The protein resides in the cell surface. It carries out the reaction (2R)-2-phosphoglycerate = phosphoenolpyruvate + H2O. Its pathway is carbohydrate degradation; glycolysis; pyruvate from D-glyceraldehyde 3-phosphate: step 4/5. Its function is as follows. Catalyzes the reversible conversion of 2-phosphoglycerate (2-PG) into phosphoenolpyruvate (PEP). It is essential for the degradation of carbohydrates via glycolysis. This Onion yellows phytoplasma (strain OY-M) protein is Enolase.